The following is a 365-amino-acid chain: Protein mab-21-like (365 aa).

Belongs to the mab-21 family.

The sequence is that of Protein mab-21-like from Aedes aegypti (Yellowfever mosquito).